Here is a 91-residue protein sequence, read N- to C-terminus: Sec-independent protein translocase protein TatA (91 aa).

The chain crosses the membrane as a helical span at residues Met1–Gly21. The segment at Lys41–Val91 is disordered. The segment covering Glu51–Pro64 has biased composition (low complexity). Residues Gln78–Val91 show a composition bias toward basic and acidic residues.

Belongs to the TatA/E family. In terms of assembly, the Tat system comprises two distinct complexes: a TatABC complex, containing multiple copies of TatA, TatB and TatC subunits, and a separate TatA complex, containing only TatA subunits. Substrates initially bind to the TatABC complex, which probably triggers association of the separate TatA complex to form the active translocon.

Its subcellular location is the cell inner membrane. Functionally, part of the twin-arginine translocation (Tat) system that transports large folded proteins containing a characteristic twin-arginine motif in their signal peptide across membranes. TatA could form the protein-conducting channel of the Tat system. This is Sec-independent protein translocase protein TatA from Pseudomonas syringae pv. syringae (strain B728a).